A 178-amino-acid chain; its full sequence is ATP synthase subunit b (178 aa).

A helical transmembrane segment spans residues 11–31 (IIPEPVEIVVGLVAFLLLLFV).

The protein belongs to the ATPase B chain family. F-type ATPases have 2 components, F(1) - the catalytic core - and F(0) - the membrane proton channel. F(1) has five subunits: alpha(3), beta(3), gamma(1), delta(1), epsilon(1). F(0) has three main subunits: a(1), b(2) and c(10-14). The alpha and beta chains form an alternating ring which encloses part of the gamma chain. F(1) is attached to F(0) by a central stalk formed by the gamma and epsilon chains, while a peripheral stalk is formed by the delta and b chains.

Its subcellular location is the cell membrane. F(1)F(0) ATP synthase produces ATP from ADP in the presence of a proton or sodium gradient. F-type ATPases consist of two structural domains, F(1) containing the extramembraneous catalytic core and F(0) containing the membrane proton channel, linked together by a central stalk and a peripheral stalk. During catalysis, ATP synthesis in the catalytic domain of F(1) is coupled via a rotary mechanism of the central stalk subunits to proton translocation. In terms of biological role, component of the F(0) channel, it forms part of the peripheral stalk, linking F(1) to F(0). This is ATP synthase subunit b from Saccharopolyspora erythraea (strain ATCC 11635 / DSM 40517 / JCM 4748 / NBRC 13426 / NCIMB 8594 / NRRL 2338).